We begin with the raw amino-acid sequence, 683 residues long: Methionine--tRNA ligase (683 aa).

The 'HIGH' region motif lies at 15 to 25; sequence PYANGSIHLGH. Zn(2+) is bound by residues C146, C149, C159, and C162. The 'KMSKS' region motif lies at 332–336; the sequence is KMSKS. K335 is a binding site for ATP. The 102-residue stretch at 582–683 folds into the tRNA-binding domain; it reads DFAKVDLRIA…QGAQAGMRVM (102 aa).

Belongs to the class-I aminoacyl-tRNA synthetase family. MetG type 1 subfamily. Homodimer. It depends on Zn(2+) as a cofactor.

Its subcellular location is the cytoplasm. It catalyses the reaction tRNA(Met) + L-methionine + ATP = L-methionyl-tRNA(Met) + AMP + diphosphate. Functionally, is required not only for elongation of protein synthesis but also for the initiation of all mRNA translation through initiator tRNA(fMet) aminoacylation. This Vibrio cholerae serotype O1 (strain ATCC 39315 / El Tor Inaba N16961) protein is Methionine--tRNA ligase.